The following is a 233-amino-acid chain: Small ribosomal subunit protein uS3 (233 aa).

The 69-residue stretch at 39-107 folds into the KH type-2 domain; that stretch reads VREFLKKRLG…PVHVNIEEVR (69 aa). The tract at residues 212–233 is disordered; it reads VQATPAAPEKKMRKGARNAAAN.

Belongs to the universal ribosomal protein uS3 family. As to quaternary structure, part of the 30S ribosomal subunit. Forms a tight complex with proteins S10 and S14.

Functionally, binds the lower part of the 30S subunit head. Binds mRNA in the 70S ribosome, positioning it for translation. The sequence is that of Small ribosomal subunit protein uS3 from Chromobacterium violaceum (strain ATCC 12472 / DSM 30191 / JCM 1249 / CCUG 213 / NBRC 12614 / NCIMB 9131 / NCTC 9757 / MK).